We begin with the raw amino-acid sequence, 204 residues long: Large ribosomal subunit protein uL3 (204 aa).

The protein belongs to the universal ribosomal protein uL3 family. In terms of assembly, part of the 50S ribosomal subunit. Forms a cluster with proteins L14 and L19.

Functionally, one of the primary rRNA binding proteins, it binds directly near the 3'-end of the 23S rRNA, where it nucleates assembly of the 50S subunit. The protein is Large ribosomal subunit protein uL3 of Azobacteroides pseudotrichonymphae genomovar. CFP2.